We begin with the raw amino-acid sequence, 83 residues long: MREDRLFARFVEYSFFAVFAALIVSYALDKLFGTSLSPLLVFLLTLIPAIGLILILPFSSRKTAILTVAVLIEMAVALYLAFR.

Transmembrane regions (helical) follow at residues 7–26 (FARFVEYSFFAVFAALIVSY), 36–58 (LSPLLVFLLTLIPAIGLILILPF), and 65–82 (ILTVAVLIEMAVALYLAF).

The protein resides in the cell membrane. This is an uncharacterized protein from Archaeoglobus fulgidus (strain ATCC 49558 / DSM 4304 / JCM 9628 / NBRC 100126 / VC-16).